The primary structure comprises 1438 residues: MAMTEQQKFKVLADQIKISNQLDAEILNSGELTRIDVSNKNRTWEFHITLPQFLAHEDYLLFINAIEQEFKDIANVTCRFTVTNGTNQDEHAIKYFGHCIDQTALSPKVKGQLKQKKLIMSGKVLKVMVSNDIERNHFDKACNGSLIKAFRNCGFDIDKIIFETNDNDQEQNLASLEAHIQEEDEQSARLATEKLEKMKAEKAKQQDNNESAVDKCQIGKPIQIENIKPIESIIEEEFKVAIEGVIFDINLKELKSGRHIVEIKVTDYTDSLVLKMFTRKNKDDLEHFKALSVGKWVRAQGRIEEDTFIRDLVMMMSDIEEIKKATKKDKAEEKRVEFHLHTAMSQMDGIPNIGAYVKQAADWGHPAIAVTDHNVVQAFPDAHAAAEKHGIKMIYGMEGMLVDDGVPIAYKPQDVVLKDATYVVFDVETTGLSNQYDKIIELAAVKVHNGEIIDKFERFSNPHERLSETIINLTHITDDMLVDAPEIEEVLTEFKEWVGDAIFVAHNASFDMGFIDTGYERLGFGPSTNGVIDTLELSRTINTEYGKHGLNFLAKKYGVELTQHHRAIYDTEATAYIFIKMVQQMKELGVLNHNEINKKLSNEDAYKRARPSHVTLIVQNQQGLKNLFKIVSASLVKYFYRTPRIPRSLLDEYREGLLVGTACDEGELFTAVMQKDQSQVEKIAKYYDFIEIQPPALYQDLIDRELIRDTETLHEIYQRLIHAGDTAGIPVIATGNAHYLFEHDGIARKILIASQPGNPLNRSTLPEAHFRTTDEMLNEFHFLGEEKAHEIVVKNTNELADRIERVVPIKDELYTPRMEGANEEIRELSYTNARKLYGEDLPQIVIDRLEKELKSIIGNGFAVIYLISQRLVKKSLDDGYLVGSRGSVGSSFVATMTEITEVNPLPPHYICPNCKTSEFFNDGSVGSGFDLPDKTCETCGAPLIKEGQDIPFETFLGFKGDKVPDIDLNFSGEYQPNAHNYTKVLFGEDKVFRAGTIGTVAEKTAFGYVKGYLNDQGIHKRGAEIDRLVKGCTGVKRTTGQHPGGIIVVPDYMDIYDFTPIQYPADDQNSAWMTTHFDFHSIHDNVLKLDILGHDDPTMIRMLQDLSGIDPKTIPVDDKEVMQIFSTPESLGVTEDEILCKTGTFGVPEFGTGFVRQMLEDTKPTTFSELVQISGLSHGTDVWLGNAQELIKTGICDLSSVIGCRDDIMVYLMYAGLEPSMAFKIMESVRKGKGLTEEMIETMKENEVPDWYLDSCLKIKYMFPKAHAAAYVLMAVRIAYFKVHHPLYYYASYFTIRASDFDLITMIKDKTSIRNTVKDMYSRYMDLGKKEKDVLTVLEIMNEMAHRGYRMQPISLEKSQAFEFIIEGDTLIPPFISVPGLGENVAKRIVEARDDGPFLSKEDLNKKAGLSQKIIEYLDELGSLPNLPDKAQLSIFDM.

In terms of domain architecture, Exonuclease spans 422–578; sequence YVVFDVETTG…YDTEATAYIF (157 aa).

It belongs to the DNA polymerase type-C family. PolC subfamily.

It is found in the cytoplasm. The catalysed reaction is DNA(n) + a 2'-deoxyribonucleoside 5'-triphosphate = DNA(n+1) + diphosphate. Functionally, required for replicative DNA synthesis. This DNA polymerase also exhibits 3' to 5' exonuclease activity. The chain is DNA polymerase III PolC-type from Staphylococcus aureus (strain Mu3 / ATCC 700698).